The following is a 194-amino-acid chain: uncharacterized protein (194 aa).

Disordered regions lie at residues 1–72 and 113–194; these read MAAK…PAAE and VLIP…SLAV. Over residues 26–39 the composition is skewed to basic and acidic residues; the sequence is AEGRSSEGRKERTA. The segment covering 146–171 has biased composition (polar residues); that stretch reads GSSSTSRNQVASLAYRTQNTAASQPR.

This is an uncharacterized protein from Homo sapiens (Human).